A 347-amino-acid polypeptide reads, in one-letter code: GMP reductase (347 aa).

108–131 (ADFEKTKQILDLNPALNFVCIDVA) provides a ligand contact to NADP(+). K(+) contacts are provided by Gly-181 and Gly-183. The active-site Thioimidate intermediate is the Cys-186. 216–239 (IVSDGGCTTPGDVAKAFGGGADFV) lines the NADP(+) pocket.

It belongs to the IMPDH/GMPR family. GuaC type 1 subfamily. Homotetramer.

It catalyses the reaction IMP + NH4(+) + NADP(+) = GMP + NADPH + 2 H(+). Functionally, catalyzes the irreversible NADPH-dependent deamination of GMP to IMP. It functions in the conversion of nucleobase, nucleoside and nucleotide derivatives of G to A nucleotides, and in maintaining the intracellular balance of A and G nucleotides. The polypeptide is GMP reductase (Shigella boydii serotype 18 (strain CDC 3083-94 / BS512)).